A 327-amino-acid polypeptide reads, in one-letter code: Lipoyl synthase (327 aa).

[4Fe-4S] cluster-binding residues include Cys72, Cys77, Cys83, Cys98, Cys102, Cys105, and Ser313. The 220-residue stretch at 83-302 (CWSHGTATIM…RRVGLEKGFL (220 aa)) folds into the Radical SAM core domain.

This sequence belongs to the radical SAM superfamily. Lipoyl synthase family. [4Fe-4S] cluster is required as a cofactor.

It localises to the cytoplasm. The catalysed reaction is [[Fe-S] cluster scaffold protein carrying a second [4Fe-4S](2+) cluster] + N(6)-octanoyl-L-lysyl-[protein] + 2 oxidized [2Fe-2S]-[ferredoxin] + 2 S-adenosyl-L-methionine + 4 H(+) = [[Fe-S] cluster scaffold protein] + N(6)-[(R)-dihydrolipoyl]-L-lysyl-[protein] + 4 Fe(3+) + 2 hydrogen sulfide + 2 5'-deoxyadenosine + 2 L-methionine + 2 reduced [2Fe-2S]-[ferredoxin]. It participates in protein modification; protein lipoylation via endogenous pathway; protein N(6)-(lipoyl)lysine from octanoyl-[acyl-carrier-protein]: step 2/2. Its function is as follows. Catalyzes the radical-mediated insertion of two sulfur atoms into the C-6 and C-8 positions of the octanoyl moiety bound to the lipoyl domains of lipoate-dependent enzymes, thereby converting the octanoylated domains into lipoylated derivatives. The polypeptide is Lipoyl synthase (Francisella philomiragia subsp. philomiragia (strain ATCC 25017 / CCUG 19701 / FSC 153 / O#319-036)).